Reading from the N-terminus, the 195-residue chain is Holliday junction branch migration complex subunit RuvA (195 aa).

A domain I region spans residues 1-66 (MNYLIFKVIY…LIIKDLYGFR (66 aa)). The interval 67–141 (TYNERLLFID…KYINKVNDKN (75 aa)) is domain II. Position 141 (N141) is a region of interest, flexible linker. Residues 141–195 (NNWAKELSIGLENLGYTKKDIEYAITKVKINSQQDIDISEIISSAIKEISLRHEN) form a domain III region.

The protein belongs to the RuvA family. Homotetramer. Forms an RuvA(8)-RuvB(12)-Holliday junction (HJ) complex. HJ DNA is sandwiched between 2 RuvA tetramers; dsDNA enters through RuvA and exits via RuvB. An RuvB hexamer assembles on each DNA strand where it exits the tetramer. Each RuvB hexamer is contacted by two RuvA subunits (via domain III) on 2 adjacent RuvB subunits; this complex drives branch migration. In the full resolvosome a probable DNA-RuvA(4)-RuvB(12)-RuvC(2) complex forms which resolves the HJ.

Its subcellular location is the cytoplasm. In terms of biological role, the RuvA-RuvB-RuvC complex processes Holliday junction (HJ) DNA during genetic recombination and DNA repair, while the RuvA-RuvB complex plays an important role in the rescue of blocked DNA replication forks via replication fork reversal (RFR). RuvA specifically binds to HJ cruciform DNA, conferring on it an open structure. The RuvB hexamer acts as an ATP-dependent pump, pulling dsDNA into and through the RuvAB complex. HJ branch migration allows RuvC to scan DNA until it finds its consensus sequence, where it cleaves and resolves the cruciform DNA. The protein is Holliday junction branch migration complex subunit RuvA of Ureaplasma parvum serovar 3 (strain ATCC 27815 / 27 / NCTC 11736).